Reading from the N-terminus, the 330-residue chain is Src kinase-associated phosphoprotein 2-B (330 aa).

The segment at 57-84 is disordered; that stretch reads DKAEDDDQEENDGFPLPPDAVSLASDRD. The span at 59 to 68 shows a compositional bias: acidic residues; it reads AEDDDQEEND. In terms of domain architecture, PH spans 105–208; the sequence is EYLKAGYLEK…WINAIMNSRG (104 aa). The tract at residues 236–261 is disordered; that stretch reads ELPEESEKPVTETETQKATPVPVNNT. The segment covering 240–250 has biased composition (basic and acidic residues); it reads ESEKPVTETET. Positions 251–261 are enriched in polar residues; that stretch reads QKATPVPVNNT. In terms of domain architecture, SH3 spans 268–329; that stretch reads DYANFYRGLW…PKAYIIEMYD (62 aa).

This sequence belongs to the SKAP family. In terms of processing, phosphorylated on tyrosines.

The protein resides in the cytoplasm. Its function is as follows. May be involved in B-cell and macrophage adhesion processes. May play a role in src signaling pathway. This is Src kinase-associated phosphoprotein 2-B (skap2-b) from Xenopus laevis (African clawed frog).